The primary structure comprises 399 residues: Tryptophan synthase beta chain (399 aa).

An N6-(pyridoxal phosphate)lysine modification is found at Lys90.

It belongs to the TrpB family. Tetramer of two alpha and two beta chains. Pyridoxal 5'-phosphate is required as a cofactor.

It carries out the reaction (1S,2R)-1-C-(indol-3-yl)glycerol 3-phosphate + L-serine = D-glyceraldehyde 3-phosphate + L-tryptophan + H2O. It participates in amino-acid biosynthesis; L-tryptophan biosynthesis; L-tryptophan from chorismate: step 5/5. Its function is as follows. The beta subunit is responsible for the synthesis of L-tryptophan from indole and L-serine. The sequence is that of Tryptophan synthase beta chain from Phocaeicola vulgatus (strain ATCC 8482 / DSM 1447 / JCM 5826 / CCUG 4940 / NBRC 14291 / NCTC 11154) (Bacteroides vulgatus).